The following is a 242-amino-acid chain: DNA repair protein RecO (242 aa).

The protein belongs to the RecO family. In terms of assembly, monomer.

Its function is as follows. Involved in DNA repair and RecF pathway recombination. The chain is DNA repair protein RecO from Salmonella enteritidis PT4 (strain P125109).